Consider the following 1177-residue polypeptide: MRRAGRSRQFSSVEEAFSTSAARPGRRGRRSGRENTAKFVPATLSASTSFSRIEGISSRSVTLASPGSRSGSGPRSGPRLGPANRSTSRYRWVPAAAGWTVGVIATVSLLGSVSPLIRYLIKVPREFINDYLFNFPDTSIAWSFVLALLAAALTARKRIAWLLLLGNMILAAALNVADIAAGDNTAAEIFGENLGFAVHIVAIVLLVLAYREFWAKVRKGALVKAAAVLVAGDVVGILVSWGLVELFPGTLARQDRLPYVVNRVVGFALADPDLFTGRPHVFLNAIFGLFGALALIMATIVLFQSQRAENALTGEDESAIRGLLELYGKNDSLGYFATRRDKSVVFAQSGRAAITYRVEIGVCLASGDPIGDPRAWPQAVDAWLGLCQTYGWAPGVMGASTQGARTYREAGLNALELGDEAILRTSEFKLSGPDMRGVRQAVTRARRAGLTVRIRRHRDISPEAMADTIARADAWRDTQTERGFSMALGRLGDPADGDCLLVEAIDRDGSVVAMLSLVPWGTTGVSLDLMRRSPSSPNGTIELMVSELALNAESLGITRISLNFAMFRSAFEQGAQLGAGPVARLWRGLLLFFSRWWQLETLYRSNMKYQPDWVPRYACYEDARLIPRVGVASVIAEGFLVLPFSRRDKVHTGHHPAVPARLAQSGLLHHDGSAPDVSGLRPERTDAEEARSRLPEQVRVRLAKLKVLQRNGVDAYPVGCPPSHTVAQALDADDQQDITVAGRILRIRDFGGVLFAQLRDWSGEMQVLLDNSRLERGRTADFTAAIDLGDLVEVSGQMGFSKKGTRSLIVTDWRMIGKCLRPLPNKWKGLTDPEARVRTRYVDLAVNPESRELIAARSEVLRSVRQTLFAKGFIEVETPILQQIHGGATARPFVTHINTYDMDLFLRIAPELYLKRLCVGGVERVFELGRAFRNEGVDFSHNPEFTLLEAYQAHADYRVWIDGCRELIQNAAQAAHGEQTVLRPGADGRLQPVDISGIWAVKTVHDAVSEALGEQVDPGTSLSTLRKLSDAARIPYRAHWDAGAVVLELYEHLVEDRTEEPTFYVDFPTSVSPLTRPHRSRPGVAERWDLVAWGVELATAYSELTDPVEQRRRLQEQSLLAAGGDPEAMELDEDFLQAMEYAMPPTGGLGMGVDRLVMLITGRSIRETLPFPLAKPH.

Disordered regions lie at residues 1-40 (MRRA…AKFV) and 61-85 (VTLA…PANR). The interval 1–676 (MRRAGRSRQF…LLHHDGSAPD (676 aa)) is phosphatidylglycerol lysyltransferase. The span at 8–21 (RQFSSVEEAFSTSA) shows a compositional bias: polar residues. Low complexity predominate over residues 65 to 82 (SPGSRSGSGPRSGPRLGP). A run of 6 helical transmembrane segments spans residues 93-113 (VPAA…LGSV), 135-155 (FPDT…ALTA), 159-179 (IAWL…VADI), 189-209 (IFGE…LVLA), 227-247 (AVLV…VELF), and 281-301 (VFLN…ATIV). The disordered stretch occupies residues 673–693 (SAPDVSGLRPERTDAEEARSR). Residues 677-1177 (VSGLRPERTD…TLPFPLAKPH (501 aa)) form a lysine--tRNA ligase region. Residues 681–693 (RPERTDAEEARSR) show a composition bias toward basic and acidic residues. Mg(2+)-binding residues include Asp1089 and Glu1096.

This sequence in the N-terminal section; belongs to the LPG synthetase family. The protein in the C-terminal section; belongs to the class-II aminoacyl-tRNA synthetase family. Mg(2+) is required as a cofactor.

It is found in the cell membrane. The enzyme catalyses tRNA(Lys) + L-lysine + ATP = L-lysyl-tRNA(Lys) + AMP + diphosphate. It carries out the reaction L-lysyl-tRNA(Lys) + a 1,2-diacyl-sn-glycero-3-phospho-(1'-sn-glycerol) = a 1,2-diacyl-sn-glycero-3-phospho-1'-(3'-O-L-lysyl)-sn-glycerol + tRNA(Lys). Functionally, catalyzes the production of L-lysyl-tRNA(Lys)transfer and the transfer of a lysyl group from L-lysyl-tRNA(Lys) to membrane-bound phosphatidylglycerol (PG), which produces lysylphosphatidylglycerol (LPG), one of the components of the bacterial membrane with a positive net charge. LPG synthesis contributes to the resistance to cationic antimicrobial peptides (CAMPs) and likely protects M.tuberculosis against the CAMPs produced by competiting microorganisms (bacteriocins). In fact, the modification of anionic phosphatidylglycerol with positively charged L-lysine results in repulsion of the peptides. The sequence is that of Lysylphosphatidylglycerol biosynthesis bifunctional protein LysX (lysX) from Mycobacterium avium (strain 104).